Consider the following 669-residue polypeptide: DNA ligase (669 aa).

Residues 35–39, 84–85, and Glu-114 contribute to the NAD(+) site; these read DSEYD and SL. Residue Lys-116 is the N6-AMP-lysine intermediate of the active site. Positions 137, 171, 287, and 311 each coordinate NAD(+). Zn(2+) is bound by residues Cys-405, Cys-408, Cys-423, and Cys-428. The region spanning 591-669 is the BRCT domain; the sequence is DSDSYFAGKT…EAQLLGELKK (79 aa).

It belongs to the NAD-dependent DNA ligase family. LigA subfamily. The cofactor is Mg(2+). Requires Mn(2+) as cofactor.

It carries out the reaction NAD(+) + (deoxyribonucleotide)n-3'-hydroxyl + 5'-phospho-(deoxyribonucleotide)m = (deoxyribonucleotide)n+m + AMP + beta-nicotinamide D-nucleotide.. DNA ligase that catalyzes the formation of phosphodiester linkages between 5'-phosphoryl and 3'-hydroxyl groups in double-stranded DNA using NAD as a coenzyme and as the energy source for the reaction. It is essential for DNA replication and repair of damaged DNA. This is DNA ligase from Bacillus velezensis (strain DSM 23117 / BGSC 10A6 / LMG 26770 / FZB42) (Bacillus amyloliquefaciens subsp. plantarum).